We begin with the raw amino-acid sequence, 252 residues long: tRNA (guanine-N(1)-)-methyltransferase (252 aa).

S-adenosyl-L-methionine is bound by residues Gly-113 and 133–138 (IGDYVL).

It belongs to the RNA methyltransferase TrmD family. In terms of assembly, homodimer.

The protein resides in the cytoplasm. The catalysed reaction is guanosine(37) in tRNA + S-adenosyl-L-methionine = N(1)-methylguanosine(37) in tRNA + S-adenosyl-L-homocysteine + H(+). In terms of biological role, specifically methylates guanosine-37 in various tRNAs. The chain is tRNA (guanine-N(1)-)-methyltransferase from Xanthomonas campestris pv. campestris (strain 8004).